The primary structure comprises 309 residues: Epidermal retinol dehydrogenase 2 (309 aa).

A helical transmembrane segment spans residues L11–I31. L44–V68 lines the NADP(+) pocket. S177 contacts substrate. Y190 (proton acceptor) is an active-site residue. Residues F270–A290 form a helical membrane-spanning segment.

It belongs to the short-chain dehydrogenases/reductases (SDR) family.

The protein resides in the endoplasmic reticulum membrane. It catalyses the reaction all-trans-retinol--[retinol-binding protein] + NAD(+) = all-trans-retinal--[retinol-binding protein] + NADH + H(+). It participates in cofactor metabolism; retinol metabolism. Functionally, oxidoreductase with strong preference for NAD. Active in both the oxidative and reductive directions. Oxidizes all-trans-retinol in all-trans-retinaldehyde. No activity was detected with 11-cis-retinol or 11-cis-retinaldehyde as substrates with either NAD(+)/NADH or NADP(+)/NADPH. This Mus musculus (Mouse) protein is Epidermal retinol dehydrogenase 2.